The primary structure comprises 411 residues: GTPase Obg (411 aa).

In terms of domain architecture, Obg spans 1–157; it reads MQFIDEARFV…REIRLELRVL (157 aa). The disordered stretch occupies residues 20–45; sequence AVSFHREKYRPRGGPDGGRGGDGGSV. A compositionally biased stretch (gly residues) spans 33–43; sequence GPDGGRGGDGG. An OBG-type G domain is found at 158 to 330; sequence SDVGLVGLPN…LERSAEAAPR (173 aa). Residues 164–171, 189–193, 212–215, 276–279, and 311–313 each bind GTP; these read GLPNAGKS, FTTLT, DIPG, NKVD, and ARL. Mg(2+)-binding residues include Ser171 and Thr191. An OCT domain is found at 335–411; that stretch reads VFRPSWRGLR…RIGDVSFEFR (77 aa).

It belongs to the TRAFAC class OBG-HflX-like GTPase superfamily. OBG GTPase family. In terms of assembly, monomer. The cofactor is Mg(2+).

The protein localises to the cytoplasm. Functionally, an essential GTPase which binds GTP, GDP and possibly (p)ppGpp with moderate affinity, with high nucleotide exchange rates and a fairly low GTP hydrolysis rate. Plays a role in control of the cell cycle, stress response, ribosome biogenesis and in those bacteria that undergo differentiation, in morphogenesis control. The polypeptide is GTPase Obg (Rubrobacter xylanophilus (strain DSM 9941 / JCM 11954 / NBRC 16129 / PRD-1)).